An 87-amino-acid chain; its full sequence is Sec-independent protein translocase protein TatA (87 aa).

A helical transmembrane segment spans residues 1–21 (MGGMSITHWIVVAVVVMIFFG). The interval 40–87 (KKGMSEDDTTPPAAPPAPAPRLENQPLPPENTTQNVAQNVPNDIKNNQ) is disordered. The span at 69 to 87 (ENTTQNVAQNVPNDIKNNQ) shows a compositional bias: polar residues.

It belongs to the TatA/E family. In terms of assembly, the Tat system comprises two distinct complexes: a TatABC complex, containing multiple copies of TatA, TatB and TatC subunits, and a separate TatA complex, containing only TatA subunits. Substrates initially bind to the TatABC complex, which probably triggers association of the separate TatA complex to form the active translocon.

It is found in the cell inner membrane. Its function is as follows. Part of the twin-arginine translocation (Tat) system that transports large folded proteins containing a characteristic twin-arginine motif in their signal peptide across membranes. TatA could form the protein-conducting channel of the Tat system. The chain is Sec-independent protein translocase protein TatA from Zymomonas mobilis subsp. mobilis (strain ATCC 31821 / ZM4 / CP4).